Here is a 1020-residue protein sequence, read N- to C-terminus: 5'-3' exoribonuclease 3 (1020 aa).

Positions 113–144 (QQRSRRFRSAKDASDAAAEEERLREEFEREGR) are disordered. Over residues 121–144 (SAKDASDAAAEEERLREEFEREGR) the composition is skewed to basic and acidic residues. The CCHC-type zinc finger occupies 262-279 (ERCFLCGQMGHFASNCEG). 2 disordered regions span residues 411-440 (QHQRQAERVKRDKAGKATKRMDDEAPTVQP) and 452-483 (RLASAPTPSPFQSNDGRSAPHQKVRRLSPGSS). Basic and acidic residues predominate over residues 414-433 (RQAERVKRDKAGKATKRMDD). A coiled-coil region spans residues 487–523 (AIVDVENSLESDERENKEELKTKLKELIREKSDAFNS). A compositionally biased stretch (low complexity) spans 831–844 (NNHGMHNNHGMHNN). Disordered regions lie at residues 831 to 859 (NNHGMHNNHGMHNNQGRQNPPGSVSGRHL), 875 to 897 (TDRYQTPTDVPAPGYGYNPPQYV), and 911 to 1020 (PGAQ…RHRY). 2 stretches are compositionally biased toward low complexity: residues 911–923 (PGAQGYAQPAPYQ) and 960–972 (GNHQNQHQQQQWH). Positions 1000 to 1020 (RGRGRGSHHHHDQGGNPRHRY) are enriched in basic residues.

Belongs to the 5'-3' exonuclease family. XRN2/RAT1 subfamily. As to expression, expressed in roots, leaves, stems and flowers.

The protein resides in the nucleus. In terms of biological role, possesses 5'-&gt;3' exoribonuclease activity. Acts as an endogenous post-transcriptional gene silencing (PTGS) suppressor. Degrades miRNA-derived loops, excised during miRNA maturation in the nucleus. Required for proper development. Involved in pre-rRNA processing. Involved with XRN2 in the 5'-end exonucleolytic processing of 5.8S and 25S rRNAs. Contributes with XRN2 to polyadenylation-dependent nuclear RNA surveillance. Involved in the degradation of aberrant polyadenylated pre-rRNA through 5'-end processing. In Arabidopsis thaliana (Mouse-ear cress), this protein is 5'-3' exoribonuclease 3.